The sequence spans 183 residues: Large ribosomal subunit protein uL6 (183 aa).

The protein belongs to the universal ribosomal protein uL6 family. As to quaternary structure, part of the 50S ribosomal subunit.

Functionally, this protein binds to the 23S rRNA, and is important in its secondary structure. It is located near the subunit interface in the base of the L7/L12 stalk, and near the tRNA binding site of the peptidyltransferase center. This is Large ribosomal subunit protein uL6 from Mycoplasmoides gallisepticum (strain R(low / passage 15 / clone 2)) (Mycoplasma gallisepticum).